We begin with the raw amino-acid sequence, 1099 residues long: Sterol regulatory element-binding protein 2 (1099 aa).

A transcriptional activation (acidic) region spans residues 1–47 (MDASEFMDTMDPSLSELGDEFTLGDIDEMLQFVSNQVDFPDIFEDQM). Residues 1–461 (MDASEFMDTM…SCVGVMDRSR (461 aa)) lie on the Cytoplasmic side of the membrane. Residues 65 to 107 (LTPPHTPVQTSSQTHTQTLTQAHTQTHTQTHTQTRTPPVLQPR) form a disordered region. Residues 71–100 (PVQTSSQTHTQTLTQAHTQTHTQTHTQTRT) show a composition bias toward low complexity. The region spanning 320 to 370 (ERRTTHNIIEKRYRSSINDKILELRDLVLGNDAKMHKSGVLRKAIDYIKYL) is the bHLH domain. Positions 370-391 (LQQVNHKLRQENLTLKMANQKN) are leucine-zipper. A helical membrane pass occupies residues 462-482 (LLLCALSFLCLSLNPLPSLLG). Residues 483-513 (AEAPAGSPEVAGHGPTRTLFSLPAQTQSFGA) lie on the Lumenal side of the membrane. The helical transmembrane segment at 514–534 (WLWCVLPFLLVWVVSGVGVVW) threads the bilayer. Residues 535–1099 (GCVRVLYLWE…LSGGTTIAAS (565 aa)) are Cytoplasmic-facing.

Belongs to the SREBP family. Forms a tight complex with scap, the SCAP-SREBP complex, in the endoplasmic reticulum membrane. As to quaternary structure, homodimer; efficient DNA binding of the soluble transcription factor fragment requires dimerization with another bHLH protein. Post-translationally, processed in the Golgi apparatus, releasing the protein from the membrane. At low cholesterol the SCAP-SREBP complex is recruited into COPII vesicles for export from the endoplasmic reticulum. In the Golgi, complex SREBPs are cleaved sequentially by site-1 (mbtps1, S1P) and site-2 (mbtps2, S2P) protease. The first cleavage by site-1 protease occurs within the luminal loop, the second cleavage by site-2 protease occurs within the first transmembrane domain, releasing the transcription factor from the Golgi membrane.

It is found in the endoplasmic reticulum membrane. The protein resides in the golgi apparatus membrane. It localises to the cytoplasmic vesicle. The protein localises to the COPII-coated vesicle membrane. Its subcellular location is the nucleus. Functionally, precursor of the transcription factor form (Processed sterol regulatory element-binding protein 2), which is embedded in the endoplasmic reticulum membrane. Low sterol concentrations promote processing of this form, releasing the transcription factor form that translocates into the nucleus and activates transcription of genes involved in cholesterol biosynthesis. In terms of biological role, key transcription factor that regulates expression of genes involved in cholesterol biosynthesis. Binds to the sterol regulatory element 1 (SRE-1) (5'-ATCACCCCAC-3'). Has dual sequence specificity binding to both an E-box motif (5'-ATCACGTGA-3') and to SRE-1 (5'-ATCACCCCAC-3'). Regulates transcription of genes related to cholesterol synthesis pathway. Activated by mediated cholesterol efflux, transactivates NOTCH and promotes hematopoietic stem and progenitor cell emergence. This Danio rerio (Zebrafish) protein is Sterol regulatory element-binding protein 2.